The chain runs to 368 residues: tRNA-specific 2-thiouridylase MnmA (368 aa).

Residues 23 to 30 (ALSGGVDS) and Leu49 contribute to the ATP site. The active-site Nucleophile is the Cys110. Residues Cys110 and Cys209 are joined by a disulfide bond. Gly135 provides a ligand contact to ATP. The interaction with tRNA stretch occupies residues 159 to 161 (KDQ). Cys209 acts as the Cysteine persulfide intermediate in catalysis. The interaction with tRNA stretch occupies residues 314–315 (RY).

It belongs to the MnmA/TRMU family.

The protein resides in the cytoplasm. The catalysed reaction is S-sulfanyl-L-cysteinyl-[protein] + uridine(34) in tRNA + AH2 + ATP = 2-thiouridine(34) in tRNA + L-cysteinyl-[protein] + A + AMP + diphosphate + H(+). Its function is as follows. Catalyzes the 2-thiolation of uridine at the wobble position (U34) of tRNA, leading to the formation of s(2)U34. The polypeptide is tRNA-specific 2-thiouridylase MnmA (Synechococcus sp. (strain JA-2-3B'a(2-13)) (Cyanobacteria bacterium Yellowstone B-Prime)).